A 283-amino-acid chain; its full sequence is Bifunctional protein FolD (283 aa).

NADP(+)-binding positions include 166–168 (GAS) and I232.

It belongs to the tetrahydrofolate dehydrogenase/cyclohydrolase family. In terms of assembly, homodimer.

It catalyses the reaction (6R)-5,10-methylene-5,6,7,8-tetrahydrofolate + NADP(+) = (6R)-5,10-methenyltetrahydrofolate + NADPH. The enzyme catalyses (6R)-5,10-methenyltetrahydrofolate + H2O = (6R)-10-formyltetrahydrofolate + H(+). It functions in the pathway one-carbon metabolism; tetrahydrofolate interconversion. Catalyzes the oxidation of 5,10-methylenetetrahydrofolate to 5,10-methenyltetrahydrofolate and then the hydrolysis of 5,10-methenyltetrahydrofolate to 10-formyltetrahydrofolate. This chain is Bifunctional protein FolD, found in Mannheimia succiniciproducens (strain KCTC 0769BP / MBEL55E).